Reading from the N-terminus, the 604-residue chain is Inositol-3-phosphate synthase 1 (604 aa).

NAD(+) is bound by residues Gly88, Gly89, Asn90, Asn91, Asp163, Ser198, Val199, Gln210, Arg213, Ser251, Gly252, Asn253, Thr254, Ser303, Asp327, Leu328, Thr330, Asn361, Asn362, Asp363, Lys376, Gly456, Asp457, Asp485, and Ser486.

This sequence belongs to the myo-inositol 1-phosphate synthase family. The cofactor is NAD(+).

The catalysed reaction is D-glucose 6-phosphate = 1D-myo-inositol 3-phosphate. It participates in polyol metabolism; myo-inositol biosynthesis; myo-inositol from D-glucose 6-phosphate: step 1/2. Functionally, key enzyme in myo-inositol biosynthesis pathway that catalyzes the conversion of glucose 6-phosphate to 1-myo-inositol 1-phosphate in a NAD-dependent manner. Rate-limiting enzyme in the synthesis of all inositol-containing compounds. De novo-synthesized myo-inositol is essential for incorporation into GPI (glycosylphosphatidylinositol) glycolipids during intra-erythrocytic development. The protein is Inositol-3-phosphate synthase 1 of Plasmodium falciparum (isolate 3D7).